Here is a 363-residue protein sequence, read N- to C-terminus: Histidinol-phosphate aminotransferase (363 aa).

N6-(pyridoxal phosphate)lysine is present on Lys220.

It belongs to the class-II pyridoxal-phosphate-dependent aminotransferase family. Histidinol-phosphate aminotransferase subfamily. As to quaternary structure, homodimer. Pyridoxal 5'-phosphate is required as a cofactor.

It catalyses the reaction L-histidinol phosphate + 2-oxoglutarate = 3-(imidazol-4-yl)-2-oxopropyl phosphate + L-glutamate. It participates in amino-acid biosynthesis; L-histidine biosynthesis; L-histidine from 5-phospho-alpha-D-ribose 1-diphosphate: step 7/9. This is Histidinol-phosphate aminotransferase from Chlorobium chlorochromatii (strain CaD3).